The sequence spans 77 residues: Cell division topological specificity factor (77 aa).

The protein belongs to the MinE family.

Prevents the cell division inhibition by proteins MinC and MinD at internal division sites while permitting inhibition at polar sites. This ensures cell division at the proper site by restricting the formation of a division septum at the midpoint of the long axis of the cell. This Helicobacter pylori (strain P12) protein is Cell division topological specificity factor.